The chain runs to 437 residues: MRVLHVAPEAYPLAKVGGLADVVGALPKALRPLGVEAHVLLPWHGGLEARRVGEVAFAFFGREERAPLGERVEGGVRFLLLGVEGFGRERVYGYPDDAERYLRFALAAKEVARGYDLVHAHDWTAALLALYAPTVYTIHNLAHQGLVDPGLFFSWTGLPWSLFHMEALEFYGRVNLMKGGIVFARRVTTVSPSYAEEIQTPEFGMGLDGVLRRHAGKLRGILNGLDTEVFDPGKDPYLPAPYTREDPSGKARAKEAFRERTGLRPPVLAYVGRLDYQKGLDLVLKALPRLLEMGFRLYVQGVGDGGLQEAFLRAEEENPEGVRFLPAYDEAMARLAYAGAEAVLVPSRFEPCGLVQMIASRYGTPPVARAVGGLKDTVEDGRGGVLFETYHPEGLLYGVLRLFRLGAEEMGLRAMEKDFSWEGPARAYREVYREALG.

An ADP-alpha-D-glucose-binding site is contributed by lysine 15.

The protein belongs to the glycosyltransferase 1 family. Bacterial/plant glycogen synthase subfamily.

It carries out the reaction [(1-&gt;4)-alpha-D-glucosyl](n) + ADP-alpha-D-glucose = [(1-&gt;4)-alpha-D-glucosyl](n+1) + ADP + H(+). It participates in glycan biosynthesis; glycogen biosynthesis. Its function is as follows. Synthesizes alpha-1,4-glucan chains using ADP-glucose. The sequence is that of Glycogen synthase from Thermus thermophilus (strain ATCC 27634 / DSM 579 / HB8).